The chain runs to 216 residues: MKIVLLGPPGAGKGTQAKSISNKYSIPHISTGDIFRKNISENTPLGIEAKGYIDNGQLVPDEVTINMVKDRLQQDDCKVGYLLDGFPRTVAQADALNNFLVDKNEQLDTALLIKVPNEFILERMTGRRVCPSCGASYHVKFNPPTNEGKCDLCGSEVIQRKDDTVETVKERLDVYQKETQPLIEFYGEKGLLSEVDGTKAINEVFRGICELLGNNK.

10-15 is an ATP binding site; it reads GAGKGT. The NMP stretch occupies residues 30–59; that stretch reads STGDIFRKNISENTPLGIEAKGYIDNGQLV. Residues Thr-31, Arg-36, 57–59, 85–88, and Gln-92 contribute to the AMP site; these read QLV and GFPR. The segment at 126 to 163 is LID; it reads GRRVCPSCGASYHVKFNPPTNEGKCDLCGSEVIQRKDD. Arg-127 is an ATP binding site. Residues Cys-130 and Cys-133 each coordinate Zn(2+). ATP is bound at residue 136–137; that stretch reads SY. Zn(2+) contacts are provided by Cys-150 and Cys-153. 2 residues coordinate AMP: Arg-160 and Arg-171. Lys-199 is a binding site for ATP.

This sequence belongs to the adenylate kinase family. In terms of assembly, monomer.

The protein resides in the cytoplasm. It catalyses the reaction AMP + ATP = 2 ADP. The protein operates within purine metabolism; AMP biosynthesis via salvage pathway; AMP from ADP: step 1/1. In terms of biological role, catalyzes the reversible transfer of the terminal phosphate group between ATP and AMP. Plays an important role in cellular energy homeostasis and in adenine nucleotide metabolism. The protein is Adenylate kinase of Clostridium beijerinckii (strain ATCC 51743 / NCIMB 8052) (Clostridium acetobutylicum).